Reading from the N-terminus, the 248-residue chain is 3-deoxy-manno-octulosonate cytidylyltransferase (248 aa).

It belongs to the KdsB family.

The protein resides in the cytoplasm. It catalyses the reaction 3-deoxy-alpha-D-manno-oct-2-ulosonate + CTP = CMP-3-deoxy-beta-D-manno-octulosonate + diphosphate. Its pathway is nucleotide-sugar biosynthesis; CMP-3-deoxy-D-manno-octulosonate biosynthesis; CMP-3-deoxy-D-manno-octulosonate from 3-deoxy-D-manno-octulosonate and CTP: step 1/1. The protein operates within bacterial outer membrane biogenesis; lipopolysaccharide biosynthesis. In terms of biological role, activates KDO (a required 8-carbon sugar) for incorporation into bacterial lipopolysaccharide in Gram-negative bacteria. The sequence is that of 3-deoxy-manno-octulosonate cytidylyltransferase from Salmonella arizonae (strain ATCC BAA-731 / CDC346-86 / RSK2980).